The chain runs to 145 residues: Large ribosomal subunit protein uL13 (145 aa).

Belongs to the universal ribosomal protein uL13 family. As to quaternary structure, part of the 50S ribosomal subunit.

In terms of biological role, this protein is one of the early assembly proteins of the 50S ribosomal subunit, although it is not seen to bind rRNA by itself. It is important during the early stages of 50S assembly. The polypeptide is Large ribosomal subunit protein uL13 (Staphylococcus haemolyticus (strain JCSC1435)).